The chain runs to 466 residues: MSNGTIVQCIGAVVDIQFPRDNMPKIYEALTLVDEGSSFAEKGLTLEVQQQLGDGVVRTIALGSSDGLRRGMQVAGTGAPISVPVGHGTLGRIMDVLGRPIDEAGPIASDEKRAIHQPAPRFDELSPSVELLETGIKVIDLVCPFAKGGKVGLFGGAGVGKTVNMMELINNIAKQHSGLSVFAGVGERTREGNDFYHEMEESNVLDKVAMVFGQMNEPPGNRLRVALTGLTMAEKFRDEGRDILFFVDNIYRYTLAGTEVSALLGRMPSAVGYQPTLAEEMGVLQERITSTKTGSITSIQAVYVPADDLTDPSPATTFQHLDSTVVLSRDIAALGIYPAVDPLDSSSRQLDPQVVGEEHYQVARGVQQTLQRYKELRDIIAILGMDELSPEDKQAVARARKIQRFLSQPFYVAEVFTGSPGKYVSLAETIRGFKMIVDGECDALPEQAFYMVGTIDEAFEKAKKLQ.

155–162 (GGAGVGKT) provides a ligand contact to ATP.

This sequence belongs to the ATPase alpha/beta chains family. F-type ATPases have 2 components, CF(1) - the catalytic core - and CF(0) - the membrane proton channel. CF(1) has five subunits: alpha(3), beta(3), gamma(1), delta(1), epsilon(1). CF(0) has three main subunits: a(1), b(2) and c(9-12). The alpha and beta chains form an alternating ring which encloses part of the gamma chain. CF(1) is attached to CF(0) by a central stalk formed by the gamma and epsilon chains, while a peripheral stalk is formed by the delta and b chains.

The protein localises to the cell inner membrane. The enzyme catalyses ATP + H2O + 4 H(+)(in) = ADP + phosphate + 5 H(+)(out). In terms of biological role, produces ATP from ADP in the presence of a proton gradient across the membrane. The catalytic sites are hosted primarily by the beta subunits. The chain is ATP synthase subunit beta from Bordetella pertussis (strain Tohama I / ATCC BAA-589 / NCTC 13251).